Here is a 396-residue protein sequence, read N- to C-terminus: Mannonate dehydratase (396 aa).

This sequence belongs to the mannonate dehydratase family. The cofactor is Fe(2+). Mn(2+) serves as cofactor.

It carries out the reaction D-mannonate = 2-dehydro-3-deoxy-D-gluconate + H2O. It functions in the pathway carbohydrate metabolism; pentose and glucuronate interconversion. Functionally, catalyzes the dehydration of D-mannonate. The protein is Mannonate dehydratase of Serratia proteamaculans (strain 568).